We begin with the raw amino-acid sequence, 495 residues long: ATP-NADH kinase YEF1 (495 aa).

The disordered stretch occupies residues 442 to 480; the sequence is KYRLDSSKNGNDTISNPLESSCISSDAQDEERKSVTETE. The span at 448 to 467 shows a compositional bias: polar residues; sequence SKNGNDTISNPLESSCISSD.

Belongs to the NAD kinase family. Homooctamer. The cofactor is Mg(2+). Requires Mn(2+) as cofactor. Co(2+) serves as cofactor. It depends on Ca(2+) as a cofactor.

The catalysed reaction is NADH + ATP = ADP + NADPH + H(+). Functionally, ATP-NADH kinase with a low phosphorylation activity of both NADH and NAD(+) to produce NADP and NADPH by using ATP. UTR1 is responsible for essentially all of the NAD/NADH kinase activity resident in the cytoplasm, whereas POS5 is responsible for all mitochondrial NAD/NADH kinase activity and consequent mitochondrial genome maintenance. YEF1 can substitute for UTR1 when overexpressed. The chain is ATP-NADH kinase YEF1 (YEF1) from Saccharomyces cerevisiae (strain ATCC 204508 / S288c) (Baker's yeast).